The following is a 192-amino-acid chain: Lumican (192 aa).

LRR repeat units follow at residues 1 to 23 (LQWL…VFSK), 26 to 46 (QLKK…PLPK), 47 to 68 (SLED…DGLL), 69 to 90 (NLTF…AAFK), 94 to 114 (SLEY…GLPA), 115 to 136 (SLLT…YFKR), 139 to 162 (GLQY…SFNI), 164 to 185 (SLVE…NENL), and 186 to 192 (ENYYLEV).

This sequence belongs to the small leucine-rich proteoglycan (SLRP) family. SLRP class II subfamily. As to quaternary structure, binds to laminin. Post-translationally, sulfated on tyrosine residue(s). In terms of processing, contains keratan sulfate.

It is found in the secreted. The protein resides in the extracellular space. It localises to the extracellular matrix. The protein is Lumican (LUM) of Oryctolagus cuniculus (Rabbit).